A 392-amino-acid polypeptide reads, in one-letter code: MHKPTPRTESPNALAFITRFFAAESAGGLVLMAAALAALIVANSPLGDSYFAALHAVFAGLSVSHWINDGLMAIFFMLVGLEIKREVLAGQLASWSQRALPGFAALGGMLVPALIYVAFNWGRPDTIGGWAIPAATDIAFALGVLSLLGKRVPLSLKIFLSALAILDDLGAVLIIALFYTSDLSIPMLLAALGSIAMLVALNRLGVKKLLPYLIVGALLWFFMLQSGIHATLAGVALALCIPLGKPDEEARSPLLHLEEKLHPWVAFAVVPIFGFANAGVSLSGITADTLVDPVPLGVALGLLVGKQVGIFAMAALAIRAGLARLPDGSNWGQLYGVAALCGIGFTMSLFIGALAFPGAPELVDEVKVGVLIGSVLSAVLGVVVLRRFAQRG.

Helical transmembrane passes span 20–40 (FFAAESAGGLVLMAAALAALI), 61–81 (LSVSHWINDGLMAIFFMLVGL), 99–119 (ALPGFAALGGMLVPALIYVAF), 127–147 (IGGWAIPAATDIAFALGVLSL), 158–178 (IFLSALAILDDLGAVLIIALF), 181–201 (SDLSIPMLLAALGSIAMLVAL), 209–229 (LLPYLIVGALLWFFMLQSGIH), 265–285 (VAFAVVPIFGFANAGVSLSGI), 298–318 (VALGLLVGKQVGIFAMAALAI), 336–356 (GVAALCGIGFTMSLFIGALAF), and 365–385 (EVKVGVLIGSVLSAVLGVVVL).

It belongs to the NhaA Na(+)/H(+) (TC 2.A.33) antiporter family.

It is found in the cell inner membrane. It catalyses the reaction Na(+)(in) + 2 H(+)(out) = Na(+)(out) + 2 H(+)(in). In terms of biological role, na(+)/H(+) antiporter that extrudes sodium in exchange for external protons. This chain is Na(+)/H(+) antiporter NhaA 2, found in Pseudomonas syringae pv. syringae (strain B728a).